The sequence spans 688 residues: Methionine--tRNA ligase (688 aa).

Positions 15–25 match the 'HIGH' region motif; the sequence is PYANGPIHLGH. Residues Cys146, Cys149, Cys159, and Cys162 each contribute to the Zn(2+) site. The short motif at 332–336 is the 'KMSKS' region element; that stretch reads KMSKS. An ATP-binding site is contributed by Lys335. The interval 552-576 is disordered; it reads AEAPKKADSKKATDTPVDTRPPLES. Over residues 554–564 the composition is skewed to basic and acidic residues; it reads APKKADSKKAT. The tRNA-binding domain maps to 587–688; that stretch reads DFAKIDLRIA…EGAQPGMRVK (102 aa).

This sequence belongs to the class-I aminoacyl-tRNA synthetase family. MetG type 1 subfamily. As to quaternary structure, homodimer. The cofactor is Zn(2+).

The protein localises to the cytoplasm. It catalyses the reaction tRNA(Met) + L-methionine + ATP = L-methionyl-tRNA(Met) + AMP + diphosphate. Its function is as follows. Is required not only for elongation of protein synthesis but also for the initiation of all mRNA translation through initiator tRNA(fMet) aminoacylation. The sequence is that of Methionine--tRNA ligase from Shewanella woodyi (strain ATCC 51908 / MS32).